We begin with the raw amino-acid sequence, 642 residues long: Acid beta-fructofuranosidase (642 aa).

Topologically, residues 1–22 are cytoplasmic; it reads MRNDSPYTPLLNASHNNHRRRE. Positions 1 to 95 are cleaved as a propeptide — removed in mature form; sequence MRNDSPYTPL…LSGNLVGEGG (95 aa). The helical; Signal-anchor for type II membrane protein transmembrane segment at 23-43 threads the bilayer; that stretch reads LLLLFSGLLLLASIIAFSAYI. Topologically, residues 44 to 642 are lumenal; the sequence is AQPHADADVS…YHPDQKRQTS (599 aa). N-linked (GlcNAc...) asparagine glycosylation is present at Asn-100. Residues 119 to 122, Gln-138, Trp-146, 181 to 182, and 245 to 246 contribute to the substrate site; these read WMND, WT, and RD. Asp-122 is an active-site residue. Asn-267 is a glycosylation site (N-linked (GlcNAc...) asparagine). The substrate site is built by Glu-300 and Asp-333. Cys-490 and Cys-538 are oxidised to a cystine. Asn-491 and Asn-615 each carry an N-linked (GlcNAc...) asparagine glycan.

This sequence belongs to the glycosyl hydrolase 32 family. May be present in two forms, a 70 kDa monomer and a heterodimer of the 30 kDa and 38 kDa subunits. The ratio of the levels of the two forms within cells appears to be regulated developmentally.

It localises to the membrane. It is found in the vacuole. Its subcellular location is the vacuole lumen. The catalysed reaction is Hydrolysis of terminal non-reducing beta-D-fructofuranoside residues in beta-D-fructofuranosides.. It participates in glycan biosynthesis; sucrose metabolism. In Vicia faba (Broad bean), this protein is Acid beta-fructofuranosidase (VCINV).